We begin with the raw amino-acid sequence, 124 residues long: Holo-[acyl-carrier-protein] synthase (124 aa).

Positions 8 and 56 each coordinate Mg(2+).

It belongs to the P-Pant transferase superfamily. AcpS family. Mg(2+) is required as a cofactor.

Its subcellular location is the cytoplasm. The enzyme catalyses apo-[ACP] + CoA = holo-[ACP] + adenosine 3',5'-bisphosphate + H(+). Functionally, transfers the 4'-phosphopantetheine moiety from coenzyme A to a Ser of acyl-carrier-protein. This is Holo-[acyl-carrier-protein] synthase from Nitratidesulfovibrio vulgaris (strain DP4) (Desulfovibrio vulgaris).